The primary structure comprises 190 residues: Putative CRISPR system CMR subunit Cmr7 2 (190 aa).

The protein belongs to the CRISPR system Cmr7 family. As to quaternary structure, homodimer.

In terms of biological role, CRISPR (clustered regularly interspaced short palindromic repeat) is an adaptive immune system that provides protection against mobile genetic elements (viruses, transposable elements and conjugative plasmids). CRISPR clusters contain spacers, sequences complementary to antecedent mobile elements, and target invading nucleic acids. CRISPR clusters are transcribed and processed into CRISPR RNA (crRNA). This Saccharolobus solfataricus (strain ATCC 35092 / DSM 1617 / JCM 11322 / P2) (Sulfolobus solfataricus) protein is Putative CRISPR system CMR subunit Cmr7 2 (cmr7b).